We begin with the raw amino-acid sequence, 357 residues long: DNA integrity scanning protein DisA (357 aa).

The DAC domain occupies 9–147; it reads DRKLLEILKT…DDIKYILRDS (139 aa). ATP contacts are provided by residues Gly76, Leu94, and 107-111; that span reads TRHRT.

Belongs to the DisA family. In terms of assembly, homooctamer. It depends on Mg(2+) as a cofactor.

The enzyme catalyses 2 ATP = 3',3'-c-di-AMP + 2 diphosphate. Participates in a DNA-damage check-point that is active prior to asymmetric division when DNA is damaged. DisA forms globular foci that rapidly scan along the chromosomes during sporulation, searching for lesions. When a lesion is present, DisA pauses at the lesion site. This triggers a cellular response that culminates in a temporary block in sporulation initiation. In terms of biological role, also has diadenylate cyclase activity, catalyzing the condensation of 2 ATP molecules into cyclic di-AMP (c-di-AMP). c-di-AMP acts as a signaling molecule that couples DNA integrity with progression of sporulation. The rise in c-di-AMP level generated by DisA while scanning the chromosome, operates as a positive signal that advances sporulation; upon encountering a lesion, the DisA focus arrests at the damaged site and halts c-di-AMP synthesis. The polypeptide is DNA integrity scanning protein DisA (Clostridium acetobutylicum (strain ATCC 824 / DSM 792 / JCM 1419 / IAM 19013 / LMG 5710 / NBRC 13948 / NRRL B-527 / VKM B-1787 / 2291 / W)).